We begin with the raw amino-acid sequence, 430 residues long: MNVGKLQPVRGTRDLLPEECYKFWHIRDVAHDIGERYGFVPVETPIFEFQDVFLKTLGDSSDIIGKEMYSFPDRGGDVLVLRPELTAAVARMLICERLTLPARLFTFGPVFRYERPQKCRQRQFHQINYEHFGAGCTADAELMALAYDILGALNLRSEVQLEINSLGNQDSVLEYRNSLLKYFEKHEHALSEDSRRRLQTNPLRILDSKDRGDIAILCGAPVIADFYDDESKMTFNGVMQQLDNLGIPYTVNPRLVRGLDYYCGTVFEFKTTSLGSQDAVIAGGRYDKLVASMGGGDVPAVGFAGGVERLASLAAYSHSTRFSVAFLPLGEEAARCAMRSAYELRGRGIRVLCDGVVEKLKIGLKHADRSGVDLALILGDEEIAKGEVLCRHMDTGLQQTVSISNLGDYVSGMESNAQGNNRAALSSAGE.

It belongs to the class-II aminoacyl-tRNA synthetase family. Homodimer.

It localises to the cytoplasm. The enzyme catalyses tRNA(His) + L-histidine + ATP = L-histidyl-tRNA(His) + AMP + diphosphate + H(+). This Anaplasma marginale (strain Florida) protein is Histidine--tRNA ligase.